Reading from the N-terminus, the 495-residue chain is DDB1- and CUL4-associated factor 4 (495 aa).

A compositionally biased stretch (basic residues) spans Met-1–His-17. Residues Met-1–Leu-66 are disordered. Positions Arg-24 to Ser-34 are enriched in basic and acidic residues. Over residues Pro-51 to Ser-62 the composition is skewed to low complexity. WD repeat units follow at residues Phe-368–Gln-407 and Gly-410–Thr-451.

As to quaternary structure, interacts with DDB1 and CUL4A.

It participates in protein modification; protein ubiquitination. May function as a substrate receptor for CUL4-DDB1 E3 ubiquitin-protein ligase complex. This Homo sapiens (Human) protein is DDB1- and CUL4-associated factor 4 (DCAF4).